A 456-amino-acid polypeptide reads, in one-letter code: Bifunctional protein GlmU (456 aa).

The tract at residues 1 to 229 is pyrophosphorylase; it reads MTKKALSAVI…VMEVEGANNR (229 aa). UDP-N-acetyl-alpha-D-glucosamine contacts are provided by residues 11 to 14, Lys25, Gln76, 81 to 82, 103 to 105, Gly140, Glu154, Asn169, and Asn227; these read LAAG, GT, and YGD. Asp105 is a Mg(2+) binding site. Asn227 contributes to the Mg(2+) binding site. The tract at residues 230-250 is linker; sequence LQLAALERYFQNKQASKLLLE. The interval 251–456 is N-acetyltransferase; that stretch reads GVMIYDPARF…QGWQRPIKKK (206 aa). Residues Arg333 and Lys351 each coordinate UDP-N-acetyl-alpha-D-glucosamine. The Proton acceptor role is filled by His363. Residues Tyr366 and Asn377 each coordinate UDP-N-acetyl-alpha-D-glucosamine. Residues Ala380, 386-387, Ser405, Ala423, and Arg440 each bind acetyl-CoA; that span reads NY.

The protein in the N-terminal section; belongs to the N-acetylglucosamine-1-phosphate uridyltransferase family. In the C-terminal section; belongs to the transferase hexapeptide repeat family. Homotrimer. The cofactor is Mg(2+).

Its subcellular location is the cytoplasm. It carries out the reaction alpha-D-glucosamine 1-phosphate + acetyl-CoA = N-acetyl-alpha-D-glucosamine 1-phosphate + CoA + H(+). It catalyses the reaction N-acetyl-alpha-D-glucosamine 1-phosphate + UTP + H(+) = UDP-N-acetyl-alpha-D-glucosamine + diphosphate. Its pathway is nucleotide-sugar biosynthesis; UDP-N-acetyl-alpha-D-glucosamine biosynthesis; N-acetyl-alpha-D-glucosamine 1-phosphate from alpha-D-glucosamine 6-phosphate (route II): step 2/2. It participates in nucleotide-sugar biosynthesis; UDP-N-acetyl-alpha-D-glucosamine biosynthesis; UDP-N-acetyl-alpha-D-glucosamine from N-acetyl-alpha-D-glucosamine 1-phosphate: step 1/1. It functions in the pathway bacterial outer membrane biogenesis; LPS lipid A biosynthesis. Its function is as follows. Catalyzes the last two sequential reactions in the de novo biosynthetic pathway for UDP-N-acetylglucosamine (UDP-GlcNAc). The C-terminal domain catalyzes the transfer of acetyl group from acetyl coenzyme A to glucosamine-1-phosphate (GlcN-1-P) to produce N-acetylglucosamine-1-phosphate (GlcNAc-1-P), which is converted into UDP-GlcNAc by the transfer of uridine 5-monophosphate (from uridine 5-triphosphate), a reaction catalyzed by the N-terminal domain. The chain is Bifunctional protein GlmU from Haemophilus influenzae (strain 86-028NP).